Consider the following 147-residue polypeptide: Large ribosomal subunit protein uL13 (147 aa).

The protein belongs to the universal ribosomal protein uL13 family. As to quaternary structure, part of the 50S ribosomal subunit.

Functionally, this protein is one of the early assembly proteins of the 50S ribosomal subunit, although it is not seen to bind rRNA by itself. It is important during the early stages of 50S assembly. This chain is Large ribosomal subunit protein uL13, found in Streptomyces griseus subsp. griseus (strain JCM 4626 / CBS 651.72 / NBRC 13350 / KCC S-0626 / ISP 5235).